A 488-amino-acid polypeptide reads, in one-letter code: UDP-N-acetylmuramate--L-alanine ligase (488 aa).

122-128 contacts ATP; that stretch reads GTHGKTT.

The protein belongs to the MurCDEF family.

Its subcellular location is the cytoplasm. It catalyses the reaction UDP-N-acetyl-alpha-D-muramate + L-alanine + ATP = UDP-N-acetyl-alpha-D-muramoyl-L-alanine + ADP + phosphate + H(+). The protein operates within cell wall biogenesis; peptidoglycan biosynthesis. Functionally, cell wall formation. The sequence is that of UDP-N-acetylmuramate--L-alanine ligase from Mycobacterium ulcerans (strain Agy99).